A 71-amino-acid chain; its full sequence is Large ribosomal subunit protein bL31 (71 aa).

Zn(2+) contacts are provided by C16, C18, C36, and C39.

The protein belongs to the bacterial ribosomal protein bL31 family. Type A subfamily. As to quaternary structure, part of the 50S ribosomal subunit. The cofactor is Zn(2+).

Functionally, binds the 23S rRNA. The polypeptide is Large ribosomal subunit protein bL31 (Petrotoga mobilis (strain DSM 10674 / SJ95)).